Reading from the N-terminus, the 578-residue chain is Phenylalanine--tRNA ligase beta subunit (578 aa).

The B5 domain occupies 292 to 370 (FDTDEKSVSH…RAYGFDNLEP (79 aa)). D348, D354, D357, and D358 together coordinate Mg(2+).

The protein belongs to the phenylalanyl-tRNA synthetase beta subunit family. Type 2 subfamily. In terms of assembly, tetramer of two alpha and two beta subunits. Requires Mg(2+) as cofactor.

The protein resides in the cytoplasm. It catalyses the reaction tRNA(Phe) + L-phenylalanine + ATP = L-phenylalanyl-tRNA(Phe) + AMP + diphosphate + H(+). The chain is Phenylalanine--tRNA ligase beta subunit from Halorubrum lacusprofundi (strain ATCC 49239 / DSM 5036 / JCM 8891 / ACAM 34).